A 225-amino-acid chain; its full sequence is Single-pass membrane and coiled-coil domain-containing protein 3 (225 aa).

A coiled-coil region spans residues 69 to 92 (IIQAMTKIQKELQKIDEALKDQLE). A helical membrane pass occupies residues 155–175 (IGTSLLGSIGVAVLSLGIDMI). Residues 182-209 (AVERTQLQAAIKSYEKHLEEFKAASAKY) adopt a coiled-coil conformation.

Its subcellular location is the membrane. The protein is Single-pass membrane and coiled-coil domain-containing protein 3 (Smco3) of Mus musculus (Mouse).